The primary structure comprises 544 residues: Exodeoxyribonuclease 7 large subunit (544 aa).

The tract at residues 522–544 (PETPPKSRKADNPPEPPEQTSFL) is disordered.

The protein belongs to the XseA family. In terms of assembly, heterooligomer composed of large and small subunits.

It localises to the cytoplasm. It catalyses the reaction Exonucleolytic cleavage in either 5'- to 3'- or 3'- to 5'-direction to yield nucleoside 5'-phosphates.. Its function is as follows. Bidirectionally degrades single-stranded DNA into large acid-insoluble oligonucleotides, which are then degraded further into small acid-soluble oligonucleotides. The protein is Exodeoxyribonuclease 7 large subunit of Zymomonas mobilis subsp. mobilis (strain ATCC 31821 / ZM4 / CP4).